The chain runs to 181 residues: Ribonuclease HII (181 aa).

Residues 1–181 (MICGIDEVGR…SLHRKNFKLI (181 aa)) enclose the RNase H type-2 domain. 3 residues coordinate a divalent metal cation: Asp-6, Glu-7, and Asp-98.

The protein belongs to the RNase HII family. Mn(2+) serves as cofactor. Mg(2+) is required as a cofactor.

The protein localises to the cytoplasm. It catalyses the reaction Endonucleolytic cleavage to 5'-phosphomonoester.. Endonuclease that specifically degrades the RNA of RNA-DNA hybrids. In Borreliella burgdorferi (strain ATCC 35210 / DSM 4680 / CIP 102532 / B31) (Borrelia burgdorferi), this protein is Ribonuclease HII (rnhB).